The following is a 446-amino-acid chain: 5-hydroxytryptamine receptor 7 (446 aa).

Residues 1 to 84 (MMGVNSSGRP…INYGRAEKVV (84 aa)) are Extracellular-facing. N-linked (GlcNAc...) asparagine glycosylation is found at Asn5 and Asn67. Residues 85 to 109 (IGSILTLITLLTIAGNCLVVISVCF) traverse the membrane as a helical segment. The Cytoplasmic segment spans residues 110–119 (VKKLRQPSNY). A helical membrane pass occupies residues 120-141 (LIVSLALADLSVAVAVIPFVSV). The Extracellular segment spans residues 142-153 (TDLIGGKWIFGH). Residues 154 to 179 (FFCNVFIAMDVMCCTASIMTLCVISI) form a helical membrane-spanning segment. A disulfide bond links Cys156 and Cys232. Asp163 contacts serotonin. The Cytoplasmic segment spans residues 180–199 (DRYLGITRPLTYPVRQNGKC). The chain crosses the membrane as a helical span at residues 200 to 220 (MPKMILSVWLLSASITLPPLF). Residues 221–238 (GWAQNVNDDKVCLISQDF) are Extracellular-facing. Residues 239–261 (GYTIYSTAVAFYIPMSVMLFMYY) traverse the membrane as a helical segment. The Cytoplasmic portion of the chain corresponds to 262 to 327 (RIYKAARKSA…SIFKREQKAA (66 aa)). Residues 328 to 353 (TTLGIIVGAFTVCWLPFFLLSTARPF) form a helical membrane-spanning segment. At 354 to 364 (ICGTACSCIPL) the chain is on the extracellular side. A helical transmembrane segment spans residues 365 to 388 (WVERTCLWLGYANSLINPFIYAFF). Topologically, residues 389 to 446 (NRDLRTTYRSLLQCQYRNINRKLSAAGMHEALKLAERPERPECVLQNSDYCRKKGHDS) are cytoplasmic. Cys402 carries S-palmitoyl cysteine lipidation.

This sequence belongs to the G-protein coupled receptor 1 family.

It localises to the cell membrane. G-protein coupled receptor for 5-hydroxytryptamine (serotonin), a biogenic hormone that functions as a neurotransmitter, a hormone and a mitogen. Ligand binding causes a conformation change that triggers signaling via guanine nucleotide-binding proteins (G proteins) and modulates the activity of downstream effectors. HTR7 is coupled to G(s) G alpha proteins and mediates activation of adenylate cyclase activity. This Cavia porcellus (Guinea pig) protein is 5-hydroxytryptamine receptor 7 (HTR7).